Consider the following 437-residue polypeptide: Elongation factor 1-gamma (437 aa).

The residue at position 2 (Ala-2) is an N-acetylalanine. Positions 2 to 87 (AAGTLYTYPE…YVSNEELRGS (86 aa)) constitute a GST N-terminal domain. The 129-residue stretch at 88 to 216 (TPEAAAQVVQ…VKLCEKMAQF (129 aa)) folds into the GST C-terminal domain. 2 positions are modified to N6-acetyllysine: Lys-147 and Lys-212. A compositionally biased stretch (basic and acidic residues) spans 221-254 (FAETQPKKDTPRKEKGSREEKQKPQAERKEEKKA). The segment at 221–268 (FAETQPKKDTPRKEKGSREEKQKPQAERKEEKKAAAPAPEEEMDECEQ) is disordered. Lys-253 is covalently cross-linked (Glycyl lysine isopeptide (Lys-Gly) (interchain with G-Cter in SUMO1)). The region spanning 276–437 (AKDPFAHLPK…KAFNQGKIFK (162 aa)) is the EF-1-gamma C-terminal domain. Residue Lys-285 forms a Glycyl lysine isopeptide (Lys-Gly) (interchain with G-Cter in SUMO2) linkage. An N6-acetyllysine modification is found at Lys-401. Lys-434 bears the N6-acetyllysine; alternate mark. Lys-434 is subject to N6-malonyllysine; alternate.

In terms of assembly, EF-1 is composed of four subunits: alpha, beta, delta, and gamma. As to expression, highly expressed in pancreatic tumor tissue and to a lesser extent in normal kidney, intestine, pancreas, stomach, lung, brain, spleen and liver.

Functionally, probably plays a role in anchoring the complex to other cellular components. The chain is Elongation factor 1-gamma (EEF1G) from Homo sapiens (Human).